Here is a 245-residue protein sequence, read N- to C-terminus: Phycocyanobilin:ferredoxin oxidoreductase (245 aa).

This sequence belongs to the HY2 family.

It carries out the reaction (2R,3Z)-phycocyanobilin + 4 oxidized [2Fe-2S]-[ferredoxin] = biliverdin IXalpha + 4 reduced [2Fe-2S]-[ferredoxin] + 4 H(+). Catalyzes the four-electron reduction of biliverdin IX-alpha (2-electron reduction at both the A and D rings); the reaction proceeds via an isolatable 2-electron intermediate, 181,182-dihydrobiliverdin. The sequence is that of Phycocyanobilin:ferredoxin oxidoreductase (pcyA) from Nostoc punctiforme (strain ATCC 29133 / PCC 73102).